Here is a 170-residue protein sequence, read N- to C-terminus: Small ribosomal subunit protein eS7 (170 aa).

Belongs to the eukaryotic ribosomal protein eS7 family. As to quaternary structure, component of the small ribosomal subunit.

It is found in the cytoplasm. This chain is Small ribosomal subunit protein eS7 (RPS7), found in Encephalitozoon cuniculi (strain GB-M1) (Microsporidian parasite).